The primary structure comprises 323 residues: Methenyltetrahydromethanopterin cyclohydrolase (323 aa).

Belongs to the MCH family.

Its subcellular location is the cytoplasm. It carries out the reaction 5,10-methenyl-5,6,7,8-tetrahydromethanopterin + H2O = N(5)-formyl-5,6,7,8-tetrahydromethanopterin + H(+). Its pathway is one-carbon metabolism; methanogenesis from CO(2); 5,10-methenyl-5,6,7,8-tetrahydromethanopterin from CO(2): step 3/3. Catalyzes the reversible interconversion of 5-formyl-H(4)MPT to methenyl-H(4)MPT(+). This is Methenyltetrahydromethanopterin cyclohydrolase from Methanococcus maripaludis (strain C5 / ATCC BAA-1333).